A 430-amino-acid polypeptide reads, in one-letter code: Glutamyl-tRNA reductase (430 aa).

Substrate is bound by residues 50–53 (TCNR), S108, 113–115 (EPQ), and Q119. Residue C51 is the Nucleophile of the active site. NADP(+) is bound at residue 188–193 (GAGEMA).

Belongs to the glutamyl-tRNA reductase family. Homodimer.

It carries out the reaction (S)-4-amino-5-oxopentanoate + tRNA(Glu) + NADP(+) = L-glutamyl-tRNA(Glu) + NADPH + H(+). It participates in porphyrin-containing compound metabolism; protoporphyrin-IX biosynthesis; 5-aminolevulinate from L-glutamyl-tRNA(Glu): step 1/2. Catalyzes the NADPH-dependent reduction of glutamyl-tRNA(Glu) to glutamate 1-semialdehyde (GSA). The polypeptide is Glutamyl-tRNA reductase (Lawsonia intracellularis (strain PHE/MN1-00)).